Consider the following 434-residue polypeptide: MESKKFRTPSQSATVIVGTQFGDEGKGKLVDYLSDKYDIVVRYQGGANAGHTICFDNKTVVLHLIPSGIFHKGCVCVIGNGVVIDPAALLDEIRKVEELGYEVTGRLFISHNAHLIMPYHKLLDSLHESAQGDQKIGTTGRGIGPSYEDKFARKGIRVVDLLNPEVLKEKLRENLAAKNKLFKNIYEKEEIDVETMVREYEDFDKIIDPYVTNTQLYLNRQLQEGKTVLLEGAQGCLLDVDHGTYPYVTSSNPTSGGASTGSGIAPNYIGKVIGVCKAYMTRVGNGAFPTELLDETGERLGKIGHEFGATTGRKRRCGWIDLVALRYSLTINGVTEIALTKLDVLDTFEEIRICTSYMLDGKEIHDFPTDHQTLSRVTPLYTTLKGWMASNAHARSFSEMQPEAQNYVTFLEDELQVQVTFISVGPGREETVFR.

Residues 22-28 (GDEGKGK) and 50-52 (GHT) contribute to the GTP site. The Proton acceptor role is filled by D23. Residues D23 and G50 each contribute to the Mg(2+) site. Residues 23 to 26 (DEGK), 48 to 51 (NAGH), T139, R153, Q234, T249, and R313 each bind IMP. H51 serves as the catalytic Proton donor. 309–315 (ATTGRKR) is a substrate binding site. GTP-binding positions include R315, 341 to 343 (KLD), and 423 to 425 (SVG).

It belongs to the adenylosuccinate synthetase family. As to quaternary structure, homodimer. Mg(2+) serves as cofactor.

It localises to the cytoplasm. The enzyme catalyses IMP + L-aspartate + GTP = N(6)-(1,2-dicarboxyethyl)-AMP + GDP + phosphate + 2 H(+). It participates in purine metabolism; AMP biosynthesis via de novo pathway; AMP from IMP: step 1/2. In terms of biological role, plays an important role in the de novo pathway of purine nucleotide biosynthesis. Catalyzes the first committed step in the biosynthesis of AMP from IMP. This Pelodictyon phaeoclathratiforme (strain DSM 5477 / BU-1) protein is Adenylosuccinate synthetase.